The chain runs to 247 residues: Carboxy-S-adenosyl-L-methionine synthase (247 aa).

Residues Tyr40, Gly65–Ser67, Asp90–Asn91, Asp122–Ile123, Asn137, and Arg204 each bind S-adenosyl-L-methionine.

The protein belongs to the class I-like SAM-binding methyltransferase superfamily. Cx-SAM synthase family. In terms of assembly, homodimer.

It carries out the reaction prephenate + S-adenosyl-L-methionine = carboxy-S-adenosyl-L-methionine + 3-phenylpyruvate + H2O. Functionally, catalyzes the conversion of S-adenosyl-L-methionine (SAM) to carboxy-S-adenosyl-L-methionine (Cx-SAM). In Pseudomonas putida (strain GB-1), this protein is Carboxy-S-adenosyl-L-methionine synthase.